The primary structure comprises 283 residues: Phosphatidylserine decarboxylase proenzyme (283 aa).

Catalysis depends on charge relay system; for autoendoproteolytic cleavage activity residues Asp-88, His-145, and Ser-248. Ser-248 functions as the Schiff-base intermediate with substrate; via pyruvic acid; for decarboxylase activity in the catalytic mechanism. Ser-248 is subject to Pyruvic acid (Ser); by autocatalysis.

Belongs to the phosphatidylserine decarboxylase family. PSD-B subfamily. Prokaryotic type I sub-subfamily. In terms of assembly, heterodimer of a large membrane-associated beta subunit and a small pyruvoyl-containing alpha subunit. The cofactor is pyruvate. Is synthesized initially as an inactive proenzyme. Formation of the active enzyme involves a self-maturation process in which the active site pyruvoyl group is generated from an internal serine residue via an autocatalytic post-translational modification. Two non-identical subunits are generated from the proenzyme in this reaction, and the pyruvate is formed at the N-terminus of the alpha chain, which is derived from the carboxyl end of the proenzyme. The autoendoproteolytic cleavage occurs by a canonical serine protease mechanism, in which the side chain hydroxyl group of the serine supplies its oxygen atom to form the C-terminus of the beta chain, while the remainder of the serine residue undergoes an oxidative deamination to produce ammonia and the pyruvoyl prosthetic group on the alpha chain. During this reaction, the Ser that is part of the protease active site of the proenzyme becomes the pyruvoyl prosthetic group, which constitutes an essential element of the active site of the mature decarboxylase.

It is found in the cell membrane. It catalyses the reaction a 1,2-diacyl-sn-glycero-3-phospho-L-serine + H(+) = a 1,2-diacyl-sn-glycero-3-phosphoethanolamine + CO2. The protein operates within phospholipid metabolism; phosphatidylethanolamine biosynthesis; phosphatidylethanolamine from CDP-diacylglycerol: step 2/2. Its function is as follows. Catalyzes the formation of phosphatidylethanolamine (PtdEtn) from phosphatidylserine (PtdSer). The sequence is that of Phosphatidylserine decarboxylase proenzyme from Variovorax paradoxus (strain S110).